The chain runs to 88 residues: Elongation factor 1-beta (88 aa).

The protein belongs to the EF-1-beta/EF-1-delta family.

In terms of biological role, promotes the exchange of GDP for GTP in EF-1-alpha/GDP, thus allowing the regeneration of EF-1-alpha/GTP that could then be used to form the ternary complex EF-1-alpha/GTP/AAtRNA. This is Elongation factor 1-beta from Haloarcula marismortui (strain ATCC 43049 / DSM 3752 / JCM 8966 / VKM B-1809) (Halobacterium marismortui).